Consider the following 468-residue polypeptide: V-type proton ATPase subunit S1 (468 aa).

The first 35 residues, 1–35, serve as a signal peptide directing secretion; sequence MMAATAAAQVRAGTRWAPALCRMPWLPLMLVAAAA. The propeptide occupies 36-228; the sequence is ATSEQQVPLV…TAVRPSRVAR (193 aa). The Lumenal segment spans residues 36-417; sequence ATSEQQVPLV…KKFSYASDCA (382 aa). Residues Asn-167, Asn-258, Asn-271, Asn-294, Asn-301, Asn-348, Asn-355, and Asn-404 are each glycosylated (N-linked (GlcNAc...) asparagine). A disulfide bridge connects residues Cys-369 and Cys-416. The helical transmembrane segment at 418–438 threads the bilayer; that stretch reads GFFSPGIWMGLLTSLFMLFIF. Over 439–468 the chain is Cytoplasmic; it reads TYGLHMILSLKTMDRFDDHKGPTITLTQIV.

Belongs to the vacuolar ATPase subunit S1 family. Accessory component of the multisubunit proton-transporting vacuolar (V)-ATPase protein pump. Interacts (via N-terminus) with ATP6AP2 (via N-terminus). Interacts with RNASEK. Interacts with TMEM106B (via C-terminus). Post-translationally, N-glycosylated.

Its subcellular location is the endoplasmic reticulum membrane. It localises to the endoplasmic reticulum-Golgi intermediate compartment membrane. It is found in the cytoplasmic vesicle. The protein localises to the secretory vesicle. The protein resides in the synaptic vesicle membrane. Its subcellular location is the clathrin-coated vesicle membrane. Accessory subunit of the proton-transporting vacuolar (V)-ATPase protein pump, which is required for luminal acidification of secretory vesicles. Guides the V-type ATPase into specialized subcellular compartments, such as neuroendocrine regulated secretory vesicles or the ruffled border of the osteoclast, thereby regulating its activity. Involved in membrane trafficking and Ca(2+)-dependent membrane fusion. May play a role in the assembly of the V-type ATPase complex. In aerobic conditions, involved in intracellular iron homeostasis, thus triggering the activity of Fe(2+) prolyl hydroxylase (PHD) enzymes, and leading to HIF1A hydroxylation and subsequent proteasomal degradation. In islets of Langerhans cells, may regulate the acidification of dense-core secretory granules. The protein is V-type proton ATPase subunit S1 (ATP6AP1) of Bos taurus (Bovine).